The sequence spans 359 residues: Cytosolic sulfotransferase 15 (359 aa).

101-106 (KSGTTW) is a binding site for 3'-phosphoadenylyl sulfate. The Proton acceptor role is filled by H168. 3'-phosphoadenylyl sulfate-binding positions include R190, S198, Y256, and 322–324 (RKG).

Belongs to the sulfotransferase 1 family. As to expression, expressed in leaves.

The protein resides in the cytoplasm. The enzyme catalyses a 12-hydroxyjasmonate + 3'-phosphoadenylyl sulfate = a 12-sulfojasmonate + adenosine 3',5'-bisphosphate + H(+). Its function is as follows. Sulfotransferase that utilizes 3'-phospho-5'-adenylyl sulfate (PAPS) as sulfonate donor to specifically catalyze the sulfate conjugation of hydroxyjasmonates, with a preference for 12-hydroxyjasmonate over 11-hydroxyjasmonate. No activity with 12-hydroxyjasmonic acid methyl ester, cucurbic acid, 7-iso-cucurbic acid, 6-epi-cucurbic acid, 6-epi-7-iso-cucurbic acid and their methyl esters, prostaglandin E2, arachidonyl alcohol and 11-eicosenol. The chain is Cytosolic sulfotransferase 15 (SOT15) from Arabidopsis thaliana (Mouse-ear cress).